Consider the following 117-residue polypeptide: Large ribosomal subunit protein bL17 (117 aa).

This sequence belongs to the bacterial ribosomal protein bL17 family. As to quaternary structure, part of the 50S ribosomal subunit. Contacts protein L32.

The polypeptide is Large ribosomal subunit protein bL17 (Dehalococcoides mccartyi (strain ATCC BAA-2100 / JCM 16839 / KCTC 5957 / BAV1)).